Reading from the N-terminus, the 249-residue chain is Uridylate kinase (249 aa).

21-24 (KLSG) lines the ATP pocket. Glycine 63 is a binding site for UMP. Residues glycine 64 and arginine 68 each coordinate ATP. UMP is bound by residues aspartate 84 and 145–152 (TGNPFVTT). Residues threonine 172, tyrosine 178, and aspartate 181 each coordinate ATP.

Belongs to the UMP kinase family. In terms of assembly, homohexamer.

The protein resides in the cytoplasm. It carries out the reaction UMP + ATP = UDP + ADP. It participates in pyrimidine metabolism; CTP biosynthesis via de novo pathway; UDP from UMP (UMPK route): step 1/1. Inhibited by UTP. Catalyzes the reversible phosphorylation of UMP to UDP. The protein is Uridylate kinase of Francisella tularensis subsp. tularensis (strain FSC 198).